Consider the following 388-residue polypeptide: Protochlorophyllide reductase A, chloroplastic (388 aa).

A chloroplast-targeting transit peptide spans 1 to 74 (MALQLLPSTL…KPSGKKTLRQ (74 aa)).

The protein belongs to the short-chain dehydrogenases/reductases (SDR) family. POR subfamily.

The protein localises to the plastid. It is found in the chloroplast. The catalysed reaction is chlorophyllide a + NADP(+) = protochlorophyllide a + NADPH + H(+). It participates in porphyrin-containing compound metabolism; chlorophyll biosynthesis. Phototransformation of protochlorophyllide (Pchlide) to chlorophyllide (Chlide). The polypeptide is Protochlorophyllide reductase A, chloroplastic (PORA) (Triticum aestivum (Wheat)).